A 105-amino-acid chain; its full sequence is Thioredoxin (105 aa).

Positions 1-105 (MANNVMDSSF…SLLDWINKSI (105 aa)) constitute a Thioredoxin domain. Cys30 and Cys33 form a disulfide bridge.

This sequence belongs to the thioredoxin family.

Component of the thioredoxin-thioredoxin reductase system. Participates in various redox reactions through the reversible oxidation of its active center dithiol to a disulfide and catalyzes dithiol-disulfide exchange reactions. The chain is Thioredoxin (trxA) from Rickettsia conorii (strain ATCC VR-613 / Malish 7).